Consider the following 597-residue polypeptide: HECT-type ubiquitin ligase-interacting protein creD (597 aa).

Disordered stretches follow at residues 375-398 (EVDPSGYRTPGPGSGPGTPFGTLS), 439-492 (ASEH…MATP), and 576-597 (SRSHSHSDDERRIRLTQARGRA). A compositionally biased stretch (polar residues) spans 452–466 (GPPSGSNTHGSNTHA). Over residues 472 to 483 (LSRRASDEDVHD) the composition is skewed to basic and acidic residues.

It belongs to the arrestin family. In terms of assembly, interacts with hulA.

Its function is as follows. Component of the regulatory network controlling carbon source utilization through ubiquitination and deubiquitination involving creA, creB, creC, creD and acrB. May be involved in signaling by recognizing appropriately phosphorylated substrates via its arrestin domains and then recruit a HECT-type ubiquitin ligase such as hulA, leading to ubiquitination of the substrate, providing a link between ubiquitination and phosphorylation in protein regulation and stability. This chain is HECT-type ubiquitin ligase-interacting protein creD (creD), found in Emericella nidulans (strain FGSC A4 / ATCC 38163 / CBS 112.46 / NRRL 194 / M139) (Aspergillus nidulans).